The sequence spans 344 residues: Arginine N-succinyltransferase (344 aa).

Position 125 (leucine 125) interacts with succinyl-CoA. Histidine 229 acts as the Proton donor in catalysis.

Belongs to the arginine N-succinyltransferase family.

It catalyses the reaction succinyl-CoA + L-arginine = N(2)-succinyl-L-arginine + CoA + H(+). The protein operates within amino-acid degradation; L-arginine degradation via AST pathway; L-glutamate and succinate from L-arginine: step 1/5. Functionally, catalyzes the transfer of succinyl-CoA to arginine to produce N(2)-succinylarginine. The polypeptide is Arginine N-succinyltransferase (Shigella flexneri).